Reading from the N-terminus, the 1373-residue chain is DNA-directed RNA polymerase subunit beta (1373 aa).

It belongs to the RNA polymerase beta chain family. The RNAP catalytic core consists of 2 alpha, 1 beta, 1 beta' and 1 omega subunit. When a sigma factor is associated with the core the holoenzyme is formed, which can initiate transcription.

It carries out the reaction RNA(n) + a ribonucleoside 5'-triphosphate = RNA(n+1) + diphosphate. Its function is as follows. DNA-dependent RNA polymerase catalyzes the transcription of DNA into RNA using the four ribonucleoside triphosphates as substrates. The sequence is that of DNA-directed RNA polymerase subunit beta from Rickettsia massiliae (strain Mtu5).